A 144-amino-acid chain; its full sequence is Deoxyuridine 5'-triphosphate nucleotidohydrolase (144 aa).

Substrate contacts are provided by residues 63–65 (RSG), asparagine 76, and 80–82 (TID).

It belongs to the dUTPase family. It depends on Mg(2+) as a cofactor.

The catalysed reaction is dUTP + H2O = dUMP + diphosphate + H(+). The protein operates within pyrimidine metabolism; dUMP biosynthesis; dUMP from dCTP (dUTP route): step 2/2. In terms of biological role, this enzyme is involved in nucleotide metabolism: it produces dUMP, the immediate precursor of thymidine nucleotides and it decreases the intracellular concentration of dUTP so that uracil cannot be incorporated into DNA. This is Deoxyuridine 5'-triphosphate nucleotidohydrolase from Alkaliphilus metalliredigens (strain QYMF).